We begin with the raw amino-acid sequence, 314 residues long: (+)-neomenthol dehydrogenase (314 aa).

NADP(+) is bound at residue 13-36 (VTGGNKGIGYETCRQLASKGVVVV). Ser-183 lines the substrate pocket. Residue Tyr-239 is the Proton acceptor of the active site.

It belongs to the short-chain dehydrogenases/reductases (SDR) family. Monomer. As to expression, expressed in flowers and red fruit tissues. Not detected in leaves, stems, roots or green fruits.

The enzyme catalyses (+)-neomenthol + NADP(+) = (1R,4S)-menthone + NADPH + H(+). Functionally, involved in basal resistance against pathogens. This is (+)-neomenthol dehydrogenase (MNR1) from Capsicum annuum (Capsicum pepper).